A 162-amino-acid polypeptide reads, in one-letter code: Class I hydrophobin dewC (162 aa).

An N-terminal signal peptide occupies residues 1–21 (MQFTIASLIATAVLGLQMASA). 4 disulfide bridges follow: cysteine 43–cysteine 119, cysteine 50–cysteine 113, cysteine 51–cysteine 90, and cysteine 120–cysteine 156.

This sequence belongs to the fungal hydrophobin family. Self-assembles to form functional amyloid fibrils called rodlets. Self-assembly into fibrillar rodlets occurs spontaneously at hydrophobic:hydrophilic interfaces and the rodlets further associate laterally to form amphipathic monolayers.

The protein localises to the secreted. It is found in the spore wall. Aerial growth, conidiation, and dispersal of filamentous fungi in the environment rely upon a capability of their secreting small amphipathic proteins called hydrophobins (HPBs) with low sequence identity. Class I can self-assemble into an outermost layer of rodlet bundles on aerial cell surfaces, conferring cellular hydrophobicity that supports fungal growth, development and dispersal; whereas Class II form highly ordered films at water-air interfaces through intermolecular interactions but contribute nothing to the rodlet structure. DewC is a class I hydrophobin that contributes to the hydrophobicity of the spore surface. This chain is Class I hydrophobin dewC, found in Emericella nidulans (strain FGSC A4 / ATCC 38163 / CBS 112.46 / NRRL 194 / M139) (Aspergillus nidulans).